The following is a 68-amino-acid chain: Disintegrin EMF10B (68 aa).

The 68-residue stretch at 1-68 (ELLQNSGNPC…SDCPRNPVFK (68 aa)) folds into the Disintegrin domain. 4 disulfide bridges follow: Cys10-Cys33, Cys24-Cys30, Cys29-Cys54, and Cys42-Cys61. The Cell attachment site; atypical (MGD) signature appears at 46–48 (MGD).

It belongs to the venom metalloproteinase (M12B) family. P-II subfamily. P-IIe sub-subfamily. In terms of assembly, heterodimer with EMF10A; disulfide-linked. In terms of tissue distribution, expressed by the venom gland.

Its subcellular location is the secreted. Extremely potent and selective inhibitor of integrin alpha-5/beta-1 (ITGA5/ITGB1). Partially inhibits adhesion of cells expressing alpha-IIb/beta-3 (ITGA2B/ITGB3), alpha-V/beta-3 (ITGAV/ITGB3), and alpha-4/beta-1 (ITGA4/ITGB1) to appropriate ligands only at concentration higher than 500 nM. Weakly inhibits ADP-induced platelet aggregation. This chain is Disintegrin EMF10B, found in Eristicophis macmahoni (Leaf-nosed viper).